The sequence spans 96 residues: U-scoloptoxin(06)-Sm1a (96 aa).

The first 23 residues, 1–23 (MNSFSFFLVIFVVLNLQVAKLMA), serve as a signal peptide directing secretion.

This sequence belongs to the scoloptoxin-06 family. Contains 2 disulfide bonds. In terms of tissue distribution, expressed by the venom gland.

The protein resides in the secreted. The chain is U-scoloptoxin(06)-Sm1a from Scolopendra morsitans (Tanzanian blue ringleg centipede).